Consider the following 216-residue polypeptide: Pyridoxine/pyridoxamine 5'-phosphate oxidase (216 aa).

FMN is bound by residues 64–69 (RVVLLK), 79–80 (FT), K85, K86, and Q108. Position 69 (K69) interacts with substrate. Residues Y126, R130, and S134 each coordinate substrate. Residues 143 to 144 (QS) and W188 contribute to the FMN site. A substrate-binding site is contributed by 194–196 (RKH). An FMN-binding site is contributed by R198.

Belongs to the pyridoxamine 5'-phosphate oxidase family. Homodimer. FMN is required as a cofactor.

The catalysed reaction is pyridoxamine 5'-phosphate + O2 + H2O = pyridoxal 5'-phosphate + H2O2 + NH4(+). It catalyses the reaction pyridoxine 5'-phosphate + O2 = pyridoxal 5'-phosphate + H2O2. It participates in cofactor metabolism; pyridoxal 5'-phosphate salvage; pyridoxal 5'-phosphate from pyridoxamine 5'-phosphate: step 1/1. It functions in the pathway cofactor metabolism; pyridoxal 5'-phosphate salvage; pyridoxal 5'-phosphate from pyridoxine 5'-phosphate: step 1/1. Its function is as follows. Catalyzes the oxidation of either pyridoxine 5'-phosphate (PNP) or pyridoxamine 5'-phosphate (PMP) into pyridoxal 5'-phosphate (PLP). This is Pyridoxine/pyridoxamine 5'-phosphate oxidase from Wolbachia pipientis wMel.